Here is a 252-residue protein sequence, read N- to C-terminus: Phosphate import ATP-binding protein PstB 1 (252 aa).

In terms of domain architecture, ABC transporter spans 6 to 247; the sequence is LKVNDLSVYY…PQKQETEDYI (242 aa). 38 to 45 contributes to the ATP binding site; sequence GPSGSGKS.

The protein belongs to the ABC transporter superfamily. Phosphate importer (TC 3.A.1.7) family. In terms of assembly, the complex is composed of two ATP-binding proteins (PstB), two transmembrane proteins (PstC and PstA) and a solute-binding protein (PstS).

It is found in the cell membrane. It catalyses the reaction phosphate(out) + ATP + H2O = ADP + 2 phosphate(in) + H(+). In terms of biological role, part of the ABC transporter complex PstSACB involved in phosphate import. Responsible for energy coupling to the transport system. This Streptococcus mutans serotype c (strain ATCC 700610 / UA159) protein is Phosphate import ATP-binding protein PstB 1.